The following is a 275-amino-acid chain: Axoneme-associated protein mst101(3) (275 aa).

12 consecutive repeat copies span residues 64 to 79, 80 to 95, 96 to 111, 112 to 127, 128 to 143, 144 to 159, 160 to 175, 181 to 196, 197 to 212, 215 to 230, 231 to 246, and 249 to 264. Residues 64–264 are 12 X 16 AA tandem repeats of [KRA]-K-[KEM]-[CKA]-[AEKD]-[EA]-[ALE]-[AMK]-[FKAML]-[KQA]-[EQKA]-[KQCEM]-[ECLA]-[AEQ]-[AEQ]-[EQAKV]; the sequence is KKKCAEAAKK…AALQKKCAEA (201 aa).

In terms of tissue distribution, testis.

It localises to the cytoplasm. Its function is as follows. Possible structural role in the sperm tail. This is Axoneme-associated protein mst101(3) (mst101(3)) from Drosophila hydei (Fruit fly).